The primary structure comprises 138 residues: Cell division protein SepF (138 aa).

This sequence belongs to the SepF family. As to quaternary structure, homodimer. Interacts with FtsZ.

The protein localises to the cytoplasm. Functionally, cell division protein that is part of the divisome complex and is recruited early to the Z-ring. Probably stimulates Z-ring formation, perhaps through the cross-linking of FtsZ protofilaments. Its function overlaps with FtsA. The sequence is that of Cell division protein SepF from Limosilactobacillus reuteri (strain DSM 20016) (Lactobacillus reuteri).